Reading from the N-terminus, the 140-residue chain is Translation initiation factor 2 subunit beta (140 aa).

The protein belongs to the eIF-2-beta/eIF-5 family. As to quaternary structure, heterotrimer composed of an alpha, a beta and a gamma chain.

In terms of biological role, eIF-2 functions in the early steps of protein synthesis by forming a ternary complex with GTP and initiator tRNA. The protein is Translation initiation factor 2 subunit beta (eif2b) of Pyrococcus horikoshii (strain ATCC 700860 / DSM 12428 / JCM 9974 / NBRC 100139 / OT-3).